We begin with the raw amino-acid sequence, 352 residues long: Pejvakin (352 aa).

The protein belongs to the gasdermin family. In terms of assembly, interacts with MAP1LC3B; interaction is direct. Interacts with IQGAP1. Interacts with ROCK2. Interacts with TRIOBP.

The protein localises to the peroxisome membrane. The protein resides in the cell projection. It is found in the cilium. Peroxisome-associated protein required to protect auditory hair cells against noise-induced damage. Acts by regulating noise-induced peroxisome proliferation in auditory hair cells and neurons, and promoting autophagic degradation of damaged peroxisomes (pexophagy). Noise overexposure increases reactive oxygen species (ROS) levels, causing oxidative damage to auditory hair cells and resulting in hearing loss. PJVK acts as a ROS sensor that recruits the autophagy machinery to trigger pexophagy of peroxisomes damaged by oxidative stress. In addition to pexophagy, also required to promote peroxisome proliferation in response to sound overstimulation. This is Pejvakin from Homo sapiens (Human).